The chain runs to 337 residues: Transaldolase (337 aa).

Residue K115 is modified to N6-acetyllysine. The active-site Schiff-base intermediate with substrate is K142. K219 is subject to N6-acetyllysine. Phosphoserine occurs at positions 237 and 256. Residues K269, K286, and K321 each carry the N6-acetyllysine modification.

Belongs to the transaldolase family. Type 1 subfamily. Homodimer.

Its subcellular location is the cytoplasm. It carries out the reaction D-sedoheptulose 7-phosphate + D-glyceraldehyde 3-phosphate = D-erythrose 4-phosphate + beta-D-fructose 6-phosphate. It functions in the pathway carbohydrate degradation; pentose phosphate pathway; D-glyceraldehyde 3-phosphate and beta-D-fructose 6-phosphate from D-ribose 5-phosphate and D-xylulose 5-phosphate (non-oxidative stage): step 2/3. Its function is as follows. Transaldolase is important for the balance of metabolites in the pentose-phosphate pathway. The sequence is that of Transaldolase (TALDO1) from Bos taurus (Bovine).